The following is a 216-amino-acid chain: Flavin-dependent thymidylate synthase (216 aa).

Residues 9–206 (GFVELVDVMG…PWTYEAFIKY (198 aa)) enclose the ThyX domain. FAD contacts are provided by residues S55, 78–80 (RHR), and E86. Residues 75–78 (QWFR), 86–90 (ELSGR), and R145 each bind dUMP. The ThyX motif motif lies at 78-88 (RHRIASYNELS). FAD is bound by residues 161–163 (NAR) and N167. A dUMP-binding site is contributed by R172. Catalysis depends on R172, which acts as the Involved in ionization of N3 of dUMP, leading to its activation.

The protein belongs to the thymidylate synthase ThyX family. Homotetramer. The cofactor is FAD.

It carries out the reaction dUMP + (6R)-5,10-methylene-5,6,7,8-tetrahydrofolate + NADPH + H(+) = dTMP + (6S)-5,6,7,8-tetrahydrofolate + NADP(+). Its pathway is pyrimidine metabolism; dTTP biosynthesis. Catalyzes the reductive methylation of 2'-deoxyuridine-5'-monophosphate (dUMP) to 2'-deoxythymidine-5'-monophosphate (dTMP) while utilizing 5,10-methylenetetrahydrofolate (mTHF) as the methyl donor, and NADPH and FADH(2) as the reductant. The protein is Flavin-dependent thymidylate synthase of Thermotoga neapolitana (strain ATCC 49049 / DSM 4359 / NBRC 107923 / NS-E).